The sequence spans 117 residues: Cuticular protein 47Eg (117 aa).

Residues 1 to 16 (MKFFIAFACLLAVALA) form the signal peptide. In terms of domain architecture, Chitin-binding type R&amp;R spans 31–97 (VDGFAYAVEL…SANPPLPTPP (67 aa)).

Component of the larval cuticle. The chain is Cuticular protein 47Eg (Cpr47Eg) from Drosophila melanogaster (Fruit fly).